The chain runs to 751 residues: Putative tyrosine-protein kinase EpsB (751 aa).

At 1–31 (MTQNLSQPPAVNAPESELDLVRYLDVLVANR) the chain is on the cytoplasmic side. A helical transmembrane segment spans residues 32–52 (WLIAGIAAVVMLLGATYAFLA). The Periplasmic segment spans residues 53–444 (RPVYEADVLV…VPEEPVKPKK (392 aa)). A helical membrane pass occupies residues 445–465 (LTVTALAGVLGVVLGVVAAFV). Residues 466–751 (RNTLFGGITE…PSAEAEAESA (286 aa)) are Cytoplasmic-facing.

It belongs to the etk/wzc family.

It is found in the cell inner membrane. The enzyme catalyses L-tyrosyl-[protein] + ATP = O-phospho-L-tyrosyl-[protein] + ADP + H(+). Its function is as follows. Probably involved in polymerization and/or export of exopolysaccharide EPS I which functions as a virulence factor. May be involved in an ATP-dependent process in the pathway for EPS I production, possibly export of the trimeric repeat units across the inner membrane or their polymerization. This chain is Putative tyrosine-protein kinase EpsB (epsB), found in Ralstonia nicotianae (strain ATCC BAA-1114 / GMI1000) (Ralstonia solanacearum).